Here is a 464-residue protein sequence, read N- to C-terminus: Kynurenine 3-monooxygenase (464 aa).

The protein belongs to the aromatic-ring hydroxylase family. KMO subfamily. Requires FAD as cofactor.

The catalysed reaction is L-kynurenine + NADPH + O2 + H(+) = 3-hydroxy-L-kynurenine + NADP(+) + H2O. It functions in the pathway cofactor biosynthesis; NAD(+) biosynthesis; quinolinate from L-kynurenine: step 1/3. Catalyzes the hydroxylation of L-kynurenine (L-Kyn) to form 3-hydroxy-L-kynurenine (L-3OHKyn). Required for synthesis of quinolinic acid. In Myxococcus xanthus (strain DK1622), this protein is Kynurenine 3-monooxygenase.